We begin with the raw amino-acid sequence, 286 residues long: MRYIRLCIISLLATLPLAVHASPQPLEQIKLSESQLSGRVGMIEMDLASGRTLTAWRADERFPMMSTFKVVLCGAVLARVDAGDEQLERKIHYRQQDLVDYSPVSEKHLADGMTVGELCAAAITMSDNSAANLLLATVGGPAGLTAFLRQIGDNVTRLDRWETELNEALPGDARDTTTPASMAATLRKLLTSQRLSARSQRQLLQWMVDDRVAGPLIRSVLPAGWFIADKTGASERGARGIVALLGPNNKAERIVVIYLRDTPASMAERNQQIAGIGAALIEHWQR.

A signal peptide spans 1 to 21; sequence MRYIRLCIISLLATLPLAVHA. S66 acts as the Acyl-ester intermediate in catalysis. The cysteines at positions 73 and 119 are disulfide-linked. The active-site Proton acceptor is the E164. 230–232 provides a ligand contact to substrate; sequence KTG.

Belongs to the class-A beta-lactamase family.

It carries out the reaction a beta-lactam + H2O = a substituted beta-amino acid. In terms of biological role, this enzyme hydrolyzes cefotaxime, ceftazidime and other broad spectrum cephalosporins. The protein is Beta-lactamase SHV-2 (bla) of Escherichia coli.